A 205-amino-acid polypeptide reads, in one-letter code: Guanylate kinase (205 aa).

One can recognise a Guanylate kinase-like domain in the interval 3–183 (GFVLLISGPS…SYEALRAILI (181 aa)). Residue 10 to 17 (GPSGAGKS) coordinates ATP.

The protein belongs to the guanylate kinase family.

The protein resides in the cytoplasm. The catalysed reaction is GMP + ATP = GDP + ADP. In terms of biological role, essential for recycling GMP and indirectly, cGMP. The polypeptide is Guanylate kinase (Campylobacter jejuni (strain RM1221)).